A 362-amino-acid polypeptide reads, in one-letter code: Chorismate synthase (362 aa).

R47 contributes to the NADP(+) binding site. FMN contacts are provided by residues 124-126 (RSS), G286, 301-305 (KPTAT), and R327.

It belongs to the chorismate synthase family. Homotetramer. The cofactor is FMNH2.

The enzyme catalyses 5-O-(1-carboxyvinyl)-3-phosphoshikimate = chorismate + phosphate. It functions in the pathway metabolic intermediate biosynthesis; chorismate biosynthesis; chorismate from D-erythrose 4-phosphate and phosphoenolpyruvate: step 7/7. Catalyzes the anti-1,4-elimination of the C-3 phosphate and the C-6 proR hydrogen from 5-enolpyruvylshikimate-3-phosphate (EPSP) to yield chorismate, which is the branch point compound that serves as the starting substrate for the three terminal pathways of aromatic amino acid biosynthesis. This reaction introduces a second double bond into the aromatic ring system. This chain is Chorismate synthase, found in Synechocystis sp. (strain ATCC 27184 / PCC 6803 / Kazusa).